The primary structure comprises 863 residues: Desmocollin-2 (863 aa).

A propeptide spanning residues Lys-1–Arg-89 is cleaved from the precursor. Cadherin domains follow at residues Arg-90–Phe-197, Thr-198–Phe-309, Thr-310–Cys-423, Asp-424–Gln-528, and Arg-529–Lys-644. Over Arg-90 to Lys-644 the chain is Extracellular. An N-linked (GlcNAc...) asparagine glycan is attached at Asn-120. 3 N-linked (GlcNAc...) asparagine glycosylation sites follow: Asn-346, Asn-495, and Asn-579. The helical transmembrane segment at Trp-645–Val-665 threads the bilayer. The Cytoplasmic portion of the chain corresponds to Cys-666 to Arg-863. Residues Ser-826, Ser-830, and Ser-835 each carry the phosphoserine modification.

Interacts with DSP, PKP2 and JUP. Interacts with DSG3; the interaction may limit the interaction of DSC3 with p38MAPK family members and therefore repress p38MAPK signaling activation. In terms of tissue distribution, expressed in esophagus and rumen. Weakly expressed in epithelia and cardiac muscle.

The protein localises to the cell membrane. Its subcellular location is the cell junction. The protein resides in the desmosome. Functionally, a component of desmosome cell-cell junctions which are required for positive regulation of cellular adhesion. Promotes timely incorporation of DSG2 into desmosome intercellular junctions and promotes interaction of desmosome cell junctions with intermediate filament cytokeratin, via modulation of DSP phosphorylation. Plays an important role in desmosome-mediated maintenance of intestinal epithelial cell intercellular adhesion strength and barrier function. Positively regulates wound healing of intestinal mucosa via promotion of epithelial cell migration, and also plays a role in mechanotransduction of force between intestinal epithelial cells and extracellular matrix. May contribute to epidermal cell positioning (stratification) by mediating differential adhesiveness between cells that express different isoforms. This is Desmocollin-2 (DSC2) from Bos taurus (Bovine).